The following is a 447-amino-acid chain: Alpha-1,3-mannosyl-glycoprotein 2-beta-N-acetylglucosaminyltransferase (447 aa).

Residues 1-6 are Cytoplasmic-facing; the sequence is MLKKQS. A helical; Signal-anchor for type II membrane protein transmembrane segment spans residues 7–29; sequence AGLVLWGAILFVAWNALLLLFFW. Over 30–447 the chain is Lumenal; sequence TRPVPSRLPS…TWDGYDPSWT (418 aa). C115 and C145 are disulfide-bonded. The substrate site is built by R117, D144, H190, and D212. D213 is a Mn(2+) binding site. The cysteines at positions 239 and 305 are disulfide-linked. D291 serves as the catalytic Proton acceptor. S322 lines the substrate pocket.

This sequence belongs to the glycosyltransferase 13 family. In terms of assembly, interacts with MGAT4D. Interacts with BRI3. Mn(2+) serves as cofactor.

The protein localises to the golgi apparatus membrane. Its subcellular location is the cytoplasm. The protein resides in the perinuclear region. It carries out the reaction N(4)-(alpha-D-Man-(1-&gt;3)-[alpha-D-Man-(1-&gt;3)-[alpha-D-Man-(1-&gt;6)]-alpha-D-Man-(1-&gt;6)]-beta-D-Man-(1-&gt;4)-beta-D-GlcNAc-(1-&gt;4)-beta-D-GlcNAc)-L-asparaginyl-[protein] (N-glucan mannose isomer 5A1,2) + UDP-N-acetyl-alpha-D-glucosamine = N(4)-{beta-D-GlcNAc-(1-&gt;2)-alpha-D-Man-(1-&gt;3)-[alpha-D-Man-(1-&gt;3)-[alpha-D-Man-(1-&gt;6)]-alpha-D-Man-(1-&gt;6)]-beta-D-Man-(1-&gt;4)-beta-D-GlcNAc-(1-&gt;4)-beta-D-GlcNAc}-L-asparaginyl-[protein] + UDP + H(+). It functions in the pathway protein modification; protein glycosylation. In terms of biological role, initiates complex N-linked carbohydrate formation. Essential for the conversion of high-mannose to hybrid and complex N-glycans. The chain is Alpha-1,3-mannosyl-glycoprotein 2-beta-N-acetylglucosaminyltransferase (MGAT1) from Oryctolagus cuniculus (Rabbit).